We begin with the raw amino-acid sequence, 116 residues long: Putative UPF0320 protein YLL065W (116 aa).

It belongs to the UPF0320 family.

This is Putative UPF0320 protein YLL065W from Saccharomyces cerevisiae (strain ATCC 204508 / S288c) (Baker's yeast).